A 553-amino-acid polypeptide reads, in one-letter code: CTP synthase (553 aa).

The interval 1–278 is amidoligase domain; that stretch reads MVRRTHGNSQ…DAYVVRELGL (278 aa). Serine 25 serves as a coordination point for CTP. Serine 25 is a binding site for UTP. ATP is bound by residues 26-31 and aspartate 83; that span reads SLGKGL. Residues aspartate 83 and glutamate 152 each contribute to the Mg(2+) site. Residues 159–161, 199–204, and lysine 235 contribute to the CTP site; these read DIE and KTKPTQ. UTP-binding positions include 199–204 and lysine 235; that span reads KTKPTQ. Positions 303-552 constitute a Glutamine amidotransferase type-1 domain; sequence NIAIVGKYID…VKAALDHQAA (250 aa). Residue glycine 366 participates in L-glutamine binding. Cysteine 393 acts as the Nucleophile; for glutamine hydrolysis in catalysis. L-glutamine is bound by residues 394–397, glutamate 417, and arginine 478; that span reads LGLQ. Active-site residues include histidine 525 and glutamate 527.

It belongs to the CTP synthase family. As to quaternary structure, homotetramer.

It catalyses the reaction UTP + L-glutamine + ATP + H2O = CTP + L-glutamate + ADP + phosphate + 2 H(+). It carries out the reaction L-glutamine + H2O = L-glutamate + NH4(+). The enzyme catalyses UTP + NH4(+) + ATP = CTP + ADP + phosphate + 2 H(+). The protein operates within pyrimidine metabolism; CTP biosynthesis via de novo pathway; CTP from UDP: step 2/2. Its activity is regulated as follows. Allosterically activated by GTP, when glutamine is the substrate; GTP has no effect on the reaction when ammonia is the substrate. The allosteric effector GTP functions by stabilizing the protein conformation that binds the tetrahedral intermediate(s) formed during glutamine hydrolysis. Inhibited by the product CTP, via allosteric rather than competitive inhibition. Its function is as follows. Catalyzes the ATP-dependent amination of UTP to CTP with either L-glutamine or ammonia as the source of nitrogen. Regulates intracellular CTP levels through interactions with the four ribonucleotide triphosphates. The polypeptide is CTP synthase (Bifidobacterium longum (strain NCC 2705)).